Consider the following 310-residue polypeptide: E3 ubiquitin-protein ligase CSU1 (310 aa).

Residues 43–67 form an RING-type 1; degenerate zinc finger; the sequence is CSLCLKPFIDPMCCHKGHVFCRECI. The stretch at 75–95 forms a coiled coil; sequence KKDIQRRLAAHSSQKKQDKDE. Residues 110–138 form a disordered region; the sequence is EFDQQNHSAMPRNSDKNHNEDKNGFHGAN. The segment covering 122–133 has biased composition (basic and acidic residues); it reads NSDKNHNEDKNG. The RING-type 2 zinc-finger motif lies at 221–263; that stretch reads CPSCKVTLTNTMSLVALSSCGHVFCKKCAEKFMPVDKVCLVCD.

Belongs to the NOSIP family.

It is found in the nucleus. It localises to the nucleus speckle. The enzyme catalyses S-ubiquitinyl-[E2 ubiquitin-conjugating enzyme]-L-cysteine + [acceptor protein]-L-lysine = [E2 ubiquitin-conjugating enzyme]-L-cysteine + N(6)-ubiquitinyl-[acceptor protein]-L-lysine.. The protein operates within protein modification; protein ubiquitination. Its function is as follows. RING-finger E3 ubiquitin-protein ligase that plays an major role in maintaining COP1 homeostasis in darkness. Negatively regulates COP1 protein accumulation by targeting COP1 for ubiquitination and subsequent proteasomal degradation in dark-grown seedlings. Negatively regulates the accumulation of SPA1 protein in the dark. This is E3 ubiquitin-protein ligase CSU1 from Arabidopsis thaliana (Mouse-ear cress).